Consider the following 537-residue polypeptide: Organic anion transporter 3 (537 aa).

Topologically, residues 1–11 are cytoplasmic; sequence MTFSEILDRVG. Phosphoserine is present on S4. Residues 12–32 traverse the membrane as a helical segment; that stretch reads SMGPFQYLHVTLLALPILGIA. Residues 33-123 are Extracellular-facing; sequence NHNLLQIFTA…LVCGSNKLKE (91 aa). The N-linked (GlcNAc...) asparagine glycan is linked to N81. The helical transmembrane segment at 124-144 threads the bilayer; that stretch reads MAQSVFMAGILVGGPVFGELS. The Cytoplasmic segment spans residues 145-150; sequence DRFGRK. Residues 151–171 form a helical membrane-spanning segment; that stretch reads PILTWSYLLLAASGSSAAFSP. The Extracellular portion of the chain corresponds to 172–176; that stretch reads SLTVY. The helical transmembrane segment at 177-197 threads the bilayer; it reads MIFRFLCGCSISGISLSTIIL. Residues 198–212 lie on the Cytoplasmic side of the membrane; sequence NVEWVPTSTRAISST. A helical membrane pass occupies residues 213–233; sequence TIGYCYTIGQFILPGLAYAVP. Residues 234–236 are Extracellular-facing; sequence QWR. The chain crosses the membrane as a helical span at residues 237 to 257; sequence WLQLSVSAAFFIFSLLSWWVP. The Cytoplasmic segment spans residues 258 to 327; it reads ESIRWLVLSG…FRVSILRRVT (70 aa). Residues 328 to 348 traverse the membrane as a helical segment; it reads FCLSLAWFATGFAYYSLAMGV. At 349–354 the chain is on the extracellular side; the sequence is EEFGVN. Residues 355 to 375 traverse the membrane as a helical segment; that stretch reads IYILQIIFGGVDIPAKFITIL. Topologically, residues 376-383 are cytoplasmic; the sequence is SISYLGRR. Residues 384–404 traverse the membrane as a helical segment; that stretch reads ITQGFLLILAGVAILALIFVS. The Extracellular segment spans residues 405–411; sequence SEMQLLR. A helical transmembrane segment spans residues 412–432; sequence TALAVFGKGCLSGSFSCLFLY. Topologically, residues 433–471 are cytoplasmic; the sequence is TSELYPTVLRQTGMGISNIWARVGSMIAPLVKITGELQP. A helical membrane pass occupies residues 472-492; sequence FIPNVIFGTMTLLGGSAAFFL. Residues 493–537 lie on the Extracellular side of the membrane; that stretch reads LETLNRPLPETIEDIQDWYQQTKKTKQEPEAEKASQTIPLKTGGP. The segment at 513-537 is disordered; sequence QTKKTKQEPEAEKASQTIPLKTGGP.

Belongs to the major facilitator (TC 2.A.1) superfamily. Organic cation transporter (TC 2.A.1.19) family. Expressed mainly in kidney. In kidney, detected in almost all parts of the nephron, including macula densa cells. Expressed (at protein level) throughout the renal cortex. Widely distributed in the brain with no large regional differences. Expressed in the choroid plexus (CP, located in the ventricles of the brain). Expressed in developing bone. Weakly expressed in brain and eye.

It localises to the basolateral cell membrane. The catalysed reaction is estrone 3-sulfate(out) + glutarate(in) = estrone 3-sulfate(in) + glutarate(out). It catalyses the reaction estrone 3-sulfate(in) + 2-oxoglutarate(out) = estrone 3-sulfate(out) + 2-oxoglutarate(in). The enzyme catalyses taurocholate(out) + glutarate(in) = taurocholate(in) + glutarate(out). It carries out the reaction dehydroepiandrosterone 3-sulfate(out) + glutarate(in) = dehydroepiandrosterone 3-sulfate(in) + glutarate(out). The catalysed reaction is glutarate(in) + 2-oxoglutarate(out) = glutarate(out) + 2-oxoglutarate(in). It catalyses the reaction urate(in) + 2-oxoglutarate(out) = urate(out) + 2-oxoglutarate(in). The enzyme catalyses prostaglandin F2alpha(out) + glutarate(in) = prostaglandin F2alpha(in) + glutarate(out). It carries out the reaction prostaglandin F2alpha(out) + 2-oxoglutarate(in) = prostaglandin F2alpha(in) + 2-oxoglutarate(out). The catalysed reaction is (R)-carnitine(out) + 2-oxoglutarate(in) = (R)-carnitine(in) + 2-oxoglutarate(out). It catalyses the reaction glutarate(in) + (R)-carnitine(out) = glutarate(out) + (R)-carnitine(in). The enzyme catalyses prostaglandin E2(out) + 2-oxoglutarate(in) = prostaglandin E2(in) + 2-oxoglutarate(out). It carries out the reaction prostaglandin E2(out) + glutarate(in) = prostaglandin E2(in) + glutarate(out). The catalysed reaction is urate(in) + glutarate(out) = urate(out) + glutarate(in). It catalyses the reaction taurocholate(out) + 2-oxoglutarate(in) = taurocholate(in) + 2-oxoglutarate(out). The enzyme catalyses dehydroepiandrosterone 3-sulfate(out) + 2-oxoglutarate(in) = dehydroepiandrosterone 3-sulfate(in) + 2-oxoglutarate(out). It carries out the reaction kynurenate(out) + a dicarboxylate(in) = kynurenate(in) + a dicarboxylate(out). The catalysed reaction is (indol-3-yl)acetate(out) + a dicarboxylate(in) = (indol-3-yl)acetate(in) + a dicarboxylate(out). It catalyses the reaction indoxyl sulfate(out) + a dicarboxylate(in) = indoxyl sulfate(in) + a dicarboxylate(out). The enzyme catalyses N-benzoylglycine(out) + a dicarboxylate(in) = N-benzoylglycine(in) + a dicarboxylate(out). It carries out the reaction 3-carboxy-4-methyl-5-propyl-2-furanpropanoate(out) + a dicarboxylate(in) = 3-carboxy-4-methyl-5-propyl-2-furanpropanoate(in) + a dicarboxylate(out). The catalysed reaction is (6R)-L-erythro-5,6,7,8-tetrahydrobiopterin(out) + a dicarboxylate(in) = (6R)-L-erythro-5,6,7,8-tetrahydrobiopterin(in) + a dicarboxylate(out). It catalyses the reaction L-erythro-7,8-dihydrobiopterin(out) + a dicarboxylate(in) = L-erythro-7,8-dihydrobiopterin(in) + a dicarboxylate(out). The enzyme catalyses L-sepiapterin(out) + a dicarboxylate(in) = L-sepiapterin(in) + a dicarboxylate(out). Its activity is regulated as follows. Expression inhibited by androgens such as testosterone. Its function is as follows. Functions as an organic anion/dicarboxylate exchanger that couples organic anion uptake indirectly to the sodium gradient. Transports organic anions such as estrone 3-sulfate (E1S) and urate in exchange for dicarboxylates such as glutarate or ketoglutarate (2-oxoglutarate). Plays an important role in the excretion of endogenous and exogenous organic anions, especially from the kidney and the brain. E1S transport is pH- and chloride-dependent and may also involve E1S/cGMP exchange. Responsible for the transport of prostaglandin E2 (PGE2) and prostaglandin F2(alpha) (PGF2(alpha)) in the basolateral side of the renal tubule. Involved in the transport of neuroactive tryptophan metabolites kynurenate and xanthurenate. Functions as a biopterin transporters involved in the uptake and the secretion of coenzymes tetrahydrobiopterin (BH4), dihydrobiopterin (BH2) and sepiapterin to urine, thereby determining baseline levels of blood biopterins. May be involved in the basolateral transport of steviol, a metabolite of the popular sugar substitute stevioside. May participate in the detoxification/ renal excretion of drugs and xenobiotics, such as the histamine H(2)-receptor antagonists fexofenadine and cimetidine, the antibiotic benzylpenicillin (PCG), the anionic herbicide 2,4-dichloro-phenoxyacetate (2,4-D), the diagnostic agent p-aminohippurate (PAH), the antiviral acyclovir (ACV), and the mycotoxin ochratoxin (OTA), by transporting these exogenous organic anions across the cell membrane in exchange for dicarboxylates such as 2-oxoglutarate. May contribute to the release of cortisol in the adrenals. Involved in one of the detoxification systems on the choroid plexus (CP), removes substrates such as E1S or taurocholate (TC), PCG, 2,4-D and PAH, from the cerebrospinal fluid (CSF) to the blood for eventual excretion in urine and bile. Also contributes to the uptake of several other organic compounds such as the prostanoids prostaglandin E(2) and prostaglandin F(2-alpha), L-carnitine, and the therapeutic drugs allopurinol, 6-mercaptopurine (6-MP) and 5-fluorouracil (5-FU). Mediates the transport of PAH, PCG, and the statins pravastatin and pitavastatin, from the cerebrum into the blood circulation across the blood-brain barrier (BBB). Contributes to the renal uptake of potent uremic toxins (indoxyl sulfate (IS), indole acetate (IA), hippurate/N-benzoylglycine (HA) and 3-carboxy-4-methyl-5-propyl-2-furanpropionate (CMPF)), pravastatin, PCG, E1S and dehydroepiandrosterone sulfate (DHEAS), and is partly involved in the renal uptake of temocaprilat (an angiotensin-converting enzyme (ACE) inhibitor). In summary, plays a role in the efflux of drugs and xenobiotics, helping reduce their undesired toxicological effects on the body. This is Organic anion transporter 3 (Slc22a8) from Mus musculus (Mouse).